Consider the following 501-residue polypeptide: Probable cytochrome P450 6a20 (501 aa).

Cys-445 is a heme binding site.

Belongs to the cytochrome P450 family. Heme serves as cofactor.

It is found in the endoplasmic reticulum membrane. The protein resides in the microsome membrane. Its function is as follows. May be involved in the metabolism of insect hormones and in the breakdown of synthetic insecticides. This Drosophila melanogaster (Fruit fly) protein is Probable cytochrome P450 6a20 (Cyp6a20).